Reading from the N-terminus, the 362-residue chain is Mortality factor 4-like protein 1 (362 aa).

A Tudor-knot domain is found at 12–51; sequence QEGERVLCFHGPLLYEAKCVKVAIKDKQVKYFIHYSGWNK. The tract at residues 26 to 62 is interaction with KAT8; it reads YEAKCVKVAIKDKQVKYFIHYSGWNKKSAVRPRRSEK. Residues 113 to 182 form a disordered region; it reads RELQKANQEQ…RKKRARVDPT (70 aa). The interval 133-266 is sufficient for interaction with SIN3A; sequence PGKKTSGLQQ…VAGIKEYFNV (134 aa). The Nuclear localization signal motif lies at 135–146; it reads KKTSGLQQKNVE. Position 143 is an N6-acetyllysine (Lys143). The interval 164 to 230 is interaction with RB1-1; it reads STSETPQPPR…FYLPAKKNVD (67 aa). The tract at residues 188 to 342 is sufficient for interaction with PHF12; the sequence is TFMNRVEVKV…FLKYLAKNSA (155 aa). An MRG domain is found at 191–362; that stretch reads NRVEVKVKIP…APPEYHRKAV (172 aa). An interaction with RB1-2 region spans residues 323–344; that stretch reads LALLLNYLHDFLKYLAKNSATL.

Component of the NuA4 histone acetyltransferase complex which contains the catalytic subunit KAT5/TIP60 and the subunits EP400, TRRAP/PAF400, BRD8/SMAP, EPC1, DMAP1/DNMAP1, RUVBL1/TIP49, RUVBL2, ING3, actin, ACTL6A/BAF53A, MORF4L1/MRG15, MORF4L2/MRGX, MRGBP, YEATS4/GAS41, VPS72/YL1 and MEAF6. The NuA4 complex interacts with MYC and the adenovirus E1A protein. MORF4L1 may also participate in the formation of NuA4 related complexes which lack the KAT5/TIP60 catalytic subunit, but which include the SWI/SNF related protein SRCAP. Component of the mSin3A histone deacetylase complex, which includes SIN3A, HDAC2, ARID4B, MORF4L1, RBBP4/RbAp48, and RBBP7/RbAp46. May also interact with PHF12 and one or more as yet undefined members of the TLE (transducin-like enhancer of split) family of transcriptional repressors. Component of the SIN3B complex, which includes SIN3B, HDAC2 or HDAC1, PHF12 and MORF4L1. Interacts with RB1 and KAT8. Interacts with the N-terminus of MRFAP1. Found in a complex composed of MORF4L1, MRFAP1 and RB1. Interacts with the entire BRCA complex, which contains BRCA1, PALB2, BRCA2 and RAD51. Interacts with PALB2. Forms a complex with MSL1 and NUPR1.

It is found in the nucleus. Its function is as follows. Component of the NuA4 histone acetyltransferase (HAT) complex which is involved in transcriptional activation of select genes principally by acetylation of nucleosomal histones H4 and H2A. This modification may both alter nucleosome - DNA interactions and promote interaction of the modified histones with other proteins which positively regulate transcription. This complex may be required for the activation of transcriptional programs associated with oncogene and proto-oncogene mediated growth induction, tumor suppressor mediated growth arrest and replicative senescence, apoptosis, and DNA repair. The NuA4 complex ATPase and helicase activities seem to be, at least in part, contributed by the association of RUVBL1 and RUVBL2 with EP400. NuA4 may also play a direct role in DNA repair when directly recruited to sites of DNA damage. As part of the SIN3B complex represses transcription and counteracts the histone acetyltransferase activity of EP300 through the recognition H3K27ac marks by PHF12 and the activity of the histone deacetylase HDAC2. SIN3B complex is recruited downstream of the constitutively active genes transcriptional start sites through interaction with histones and mitigates histone acetylation and RNA polymerase II progression within transcribed regions contributing to the regulation of transcription. Required for homologous recombination repair (HRR) and resistance to mitomycin C (MMC). Involved in the localization of PALB2, BRCA2 and RAD51, but not BRCA1, to DNA-damage foci. The chain is Mortality factor 4-like protein 1 (Morf4l1) from Mus musculus (Mouse).